The chain runs to 58 residues: Teratocyte protein CftICK-III (58 aa).

The N-terminal stretch at 1 to 24 (MQKFMRLFFLGLFFILFMTTQIKA) is a signal peptide. 3 disulfide bridges follow: Cys27/Cys42, Cys34/Cys47, and Cys41/Cys55.

Abundantly expressed by teratocytes, which are extra-embryonic cells released by parasitoid wasps into their hosts during larval eclosion.

It is found in the secreted. Its function is as follows. This endoparasitoid wasp peptide has immununosuppressive and insecticidal activities. Suppress cellular immunity which is detectable as a reduction of hemocyte encapsulation in the host. In vivo, ingestion of this peptide (probably at excessive doses) increases larval mortality and reduces leaf consumption in both lepidopteran species D.saccharalis and S.frugiperda, which are permissive and non-permissive hosts for C.flavipes, respectively. This chain is Teratocyte protein CftICK-III, found in Cotesia flavipes (Parasitic wasp).